The chain runs to 432 residues: Histidine--tRNA ligase (432 aa).

The protein belongs to the class-II aminoacyl-tRNA synthetase family.

The protein resides in the cytoplasm. The catalysed reaction is tRNA(His) + L-histidine + ATP = L-histidyl-tRNA(His) + AMP + diphosphate + H(+). This is Histidine--tRNA ligase from Pyrococcus furiosus (strain ATCC 43587 / DSM 3638 / JCM 8422 / Vc1).